A 573-amino-acid polypeptide reads, in one-letter code: Solute carrier family 41 member 2 (573 aa).

Over 1-162 the chain is Extracellular; it reads MTNSKGRSIT…KESSGIMALQ (162 aa). Residues S136 and S137 each carry the phosphoserine modification. The chain crosses the membrane as a helical span at residues 163–183; sequence ILVPFLLAGFGTVSAGMVLDI. The Cytoplasmic segment spans residues 184–195; the sequence is VQHWEVFRKVTE. Residues 196 to 216 traverse the membrane as a helical segment; it reads VFILVPALLGLKGNLEMTLAS. At 217–245 the chain is on the extracellular side; it reads RLSTAVNIGKMDSPIEKWNLIIGNLALKQ. The helical transmembrane segment at 246-266 threads the bilayer; sequence VQATVVGFLAAVAAIILGWIP. The Cytoplasmic segment spans residues 267–282; that stretch reads EGKYYLDHSILLCSSS. Residues 283–303 traverse the membrane as a helical segment; that stretch reads VATAFIASLLQGIIMVGVIVG. Residues 304 to 313 are Extracellular-facing; it reads SKKTGINPDN. Residues 314 to 334 traverse the membrane as a helical segment; it reads VATPIAASFGDLITLAILAWI. Topologically, residues 335-347 are cytoplasmic; sequence SQGLYSCLETYYY. Residues 348–368 form a helical membrane-spanning segment; it reads ISPLVGVFFLALTPIWIIIAA. Topologically, residues 369-376 are extracellular; it reads KHPATRTV. A helical transmembrane segment spans residues 377–397; the sequence is LHSGWEPVITAMVISSIGGLI. The Cytoplasmic portion of the chain corresponds to 398 to 406; the sequence is LDTTVSDPN. A helical membrane pass occupies residues 407–427; the sequence is LVGIVVYTPVINGIGGNLVAI. At 428 to 469 the chain is on the extracellular side; the sequence is QASRISTYLHLHSIPGELPDEPKGCYYPFRTFFGPGVNNKSA. A helical transmembrane segment spans residues 470-490; sequence QVLLLLVIPGHLIFLYTIHLM. At 491 to 498 the chain is on the cytoplasmic side; the sequence is KSGHTSLT. The chain crosses the membrane as a helical span at residues 499–519; sequence IIFIVVYLFAAVLQVFTLLWI. At 520–543 the chain is on the extracellular side; the sequence is ADWMVHHFWRKGKDPDSFSIPYLT. Residues 544-564 traverse the membrane as a helical segment; it reads ALGDLLGTALLALSFHFLWLI. Topologically, residues 565-573 are cytoplasmic; that stretch reads GDRDGDVGD.

It belongs to the SLC41A transporter family.

Its subcellular location is the cell membrane. It catalyses the reaction Mg(2+)(in) = Mg(2+)(out). It carries out the reaction Mn(2+)(in) = Mn(2+)(out). The enzyme catalyses Co(2+)(in) = Co(2+)(out). The catalysed reaction is Ni(2+)(in) = Ni(2+)(out). It catalyses the reaction Fe(2+)(in) = Fe(2+)(out). Acts as a plasma-membrane magnesium transporter. Can also mediate the transport of other divalent metal cations in an order of Ba(2+) &gt; Ni(2+) &gt; Co(2+) &gt; Fe(2+) &gt; Mn(2+). This Macaca fascicularis (Crab-eating macaque) protein is Solute carrier family 41 member 2 (SLC41A2).